The chain runs to 163 residues: Regulatory protein RecX (163 aa).

The segment at 1–21 (MSDAEDIPTGRKRRPREQTPV) is disordered.

This sequence belongs to the RecX family.

Its subcellular location is the cytoplasm. Modulates RecA activity. In Stenotrophomonas maltophilia (strain R551-3), this protein is Regulatory protein RecX.